Reading from the N-terminus, the 254-residue chain is 4-hydroxy-tetrahydrodipicolinate reductase (254 aa).

NAD(+) contacts are provided by residues 8–13 (GCSGKM), Asp-35, 86–88 (CST), and 110–113 (SANM). The active-site Proton donor/acceptor is His-143. His-144 is a binding site for (S)-2,3,4,5-tetrahydrodipicolinate. Lys-147 (proton donor) is an active-site residue. 153–154 (GT) contacts (S)-2,3,4,5-tetrahydrodipicolinate.

This sequence belongs to the DapB family.

It is found in the cytoplasm. It carries out the reaction (S)-2,3,4,5-tetrahydrodipicolinate + NAD(+) + H2O = (2S,4S)-4-hydroxy-2,3,4,5-tetrahydrodipicolinate + NADH + H(+). The catalysed reaction is (S)-2,3,4,5-tetrahydrodipicolinate + NADP(+) + H2O = (2S,4S)-4-hydroxy-2,3,4,5-tetrahydrodipicolinate + NADPH + H(+). It participates in amino-acid biosynthesis; L-lysine biosynthesis via DAP pathway; (S)-tetrahydrodipicolinate from L-aspartate: step 4/4. Functionally, catalyzes the conversion of 4-hydroxy-tetrahydrodipicolinate (HTPA) to tetrahydrodipicolinate. The polypeptide is 4-hydroxy-tetrahydrodipicolinate reductase (Clostridium perfringens (strain ATCC 13124 / DSM 756 / JCM 1290 / NCIMB 6125 / NCTC 8237 / Type A)).